The primary structure comprises 208 residues: Uracil phosphoribosyltransferase (208 aa).

Residues Arg-78, Arg-103, and 130-138 (DPMLATGGT) contribute to the 5-phospho-alpha-D-ribose 1-diphosphate site. Uracil-binding positions include Ile-193 and 198–200 (GDA). Asp-199 is a 5-phospho-alpha-D-ribose 1-diphosphate binding site.

The protein belongs to the UPRTase family. Mg(2+) is required as a cofactor.

The enzyme catalyses UMP + diphosphate = 5-phospho-alpha-D-ribose 1-diphosphate + uracil. The protein operates within pyrimidine metabolism; UMP biosynthesis via salvage pathway; UMP from uracil: step 1/1. Its activity is regulated as follows. Allosterically activated by GTP. Its function is as follows. Catalyzes the conversion of uracil and 5-phospho-alpha-D-ribose 1-diphosphate (PRPP) to UMP and diphosphate. The sequence is that of Uracil phosphoribosyltransferase from Maridesulfovibrio salexigens (strain ATCC 14822 / DSM 2638 / NCIMB 8403 / VKM B-1763) (Desulfovibrio salexigens).